The sequence spans 234 residues: Carboxy-S-adenosyl-L-methionine synthase (234 aa).

S-adenosyl-L-methionine-binding positions include Tyr-35, 60-62 (GCS), 83-84 (DN), 109-110 (DI), Asn-124, and Arg-191.

The protein belongs to the class I-like SAM-binding methyltransferase superfamily. Cx-SAM synthase family. Homodimer.

The enzyme catalyses prephenate + S-adenosyl-L-methionine = carboxy-S-adenosyl-L-methionine + 3-phenylpyruvate + H2O. Functionally, catalyzes the conversion of S-adenosyl-L-methionine (SAM) to carboxy-S-adenosyl-L-methionine (Cx-SAM). The chain is Carboxy-S-adenosyl-L-methionine synthase from Campylobacter hominis (strain ATCC BAA-381 / DSM 21671 / CCUG 45161 / LMG 19568 / NCTC 13146 / CH001A).